Consider the following 519-residue polypeptide: VDHYTYCILGDGCQMEGVSNEACSIAAHWGLGKLIALYDDNHISIDGDTDIAFTEDVDKRFEALGWHVIWVKNGNNGYDKIRAAIKEAQAVKDKPTMIKITTTIGFGSPNKSNSYSVHGSALGAKEVEATRQNLGWPYEPFHVPDDVKKHWSRHTPQGASLESEWNAKFAEYEKKYPEEAAELKSIITGELPLGWEKALPTYTPENPGDATRNLSQQNLNALAKVLPGLLGGSADLASSNMTLLKSSGDFQKNTPEERNVRFGVREHGMGAICNGIALHSPGLIPYCATFFVFTDYMRAAMRISALCEARVIYVMTHDSIGLGEDGPTHQPIEHLASFRAMPNILMLRPADGNETAGAYKVAVQNLKRPSVLALSRQKLPQLPGTSIEGVEKGGYVISDNSSGNKPDVILIGTGSELEIAAKAGEVLRKEGKGVRVVSFVSWELFDEQSKEYKESVLPSSVTARVSIEAGSTFGWGKIVGSKGKAIGIDRFGASAPAGKIYEEFGITVEAVVAAAKELI.

Aspartate 11 serves as a coordination point for Mg(2+). Glycine 12 and asparagine 41 together coordinate thiamine diphosphate. Mg(2+)-binding residues include asparagine 41 and isoleucine 43. Histidine 118 serves as a coordination point for thiamine diphosphate. Substrate-binding residues include histidine 118, arginine 212, and serine 239. 2 residues coordinate thiamine diphosphate: glutamate 266 and phenylalanine 293. Residue glutamate 266 is the Proton donor of the active site. The substrate site is built by histidine 317, aspartate 325, and arginine 376.

The protein belongs to the transketolase family. Homodimer. The cofactor is Mg(2+). Requires Ca(2+) as cofactor. It depends on Mn(2+) as a cofactor. Co(2+) is required as a cofactor. Thiamine diphosphate serves as cofactor. Constitutively expressed in leaves and roots.

Its subcellular location is the plastid. It is found in the chloroplast. It catalyses the reaction D-sedoheptulose 7-phosphate + D-glyceraldehyde 3-phosphate = aldehydo-D-ribose 5-phosphate + D-xylulose 5-phosphate. Catalyzes the transfer of a two-carbon ketol group from a ketose donor to an aldose acceptor, via a covalent intermediate with the cofactor thiamine pyrophosphate. The polypeptide is Transketolase, chloroplastic (TKT3) (Craterostigma plantagineum (Blue gem)).